Reading from the N-terminus, the 504-residue chain is Glycerol kinase (504 aa).

T13 serves as a coordination point for ADP. ATP-binding residues include T13, T14, and S15. T13 is a binding site for sn-glycerol 3-phosphate. ADP is bound at residue R17. Sn-glycerol 3-phosphate-binding residues include R83, E84, and Y135. Glycerol-binding residues include R83, E84, and Y135. H231 is modified (phosphohistidine; by HPr). D245 contacts sn-glycerol 3-phosphate. The glycerol site is built by D245 and Q246. ADP contacts are provided by T267 and G310. Residues T267, G310, Q314, and G411 each contribute to the ATP site. Residues G411 and N415 each coordinate ADP.

It belongs to the FGGY kinase family. Homotetramer and homodimer (in equilibrium). Post-translationally, the phosphoenolpyruvate-dependent sugar phosphotransferase system (PTS), including enzyme I, and histidine-containing protein (HPr) are required for the phosphorylation, which leads to the activation of the enzyme.

It carries out the reaction glycerol + ATP = sn-glycerol 3-phosphate + ADP + H(+). Its pathway is polyol metabolism; glycerol degradation via glycerol kinase pathway; sn-glycerol 3-phosphate from glycerol: step 1/1. Its activity is regulated as follows. Activated by phosphorylation and inhibited by fructose 1,6-bisphosphate (FBP). In terms of biological role, key enzyme in the regulation of glycerol uptake and metabolism. Catalyzes the phosphorylation of glycerol to yield sn-glycerol 3-phosphate. The sequence is that of Glycerol kinase from Ligilactobacillus salivarius (strain UCC118) (Lactobacillus salivarius).